The following is a 346-amino-acid chain: Nitrilase 3 (346 aa).

Serine 2 carries the N-acetylserine modification. Positions 25-297 (VRVTIVQSST…EGLVTADLDL (273 aa)) constitute a CN hydrolase domain. Glutamate 65 functions as the Proton acceptor in the catalytic mechanism. Lysine 152 serves as the catalytic Proton donor. Catalysis depends on cysteine 186, which acts as the Nucleophile.

This sequence belongs to the carbon-nitrogen hydrolase superfamily. Nitrilase family.

It is found in the cell membrane. The enzyme catalyses a nitrile + 2 H2O = a carboxylate + NH4(+). Can convert indole-3-acetonitrile to the plant hormone indole-3-acetic acid. This is Nitrilase 3 (NIT3) from Arabidopsis thaliana (Mouse-ear cress).